Here is a 447-residue protein sequence, read N- to C-terminus: Acid phosphatase (447 aa).

An N-terminal signal peptide occupies residues 1 to 17 (MKPSVATLLATVSLVYA). 5 N-linked (GlcNAc...) asparagine glycosylation sites follow: Asn-119, Asn-150, Asn-177, Asn-186, and Asn-208. Catalysis depends on Asp-215, which acts as the Proton donor. 7 N-linked (GlcNAc...) asparagine glycosylation sites follow: Asn-217, Asn-234, Asn-240, Asn-315, Asn-332, Asn-382, and Asn-405. Ser-419 carries the GPI-like-anchor amidated serine lipid modification. The propeptide at 420-447 (ASSNAAVSAVAPAAGVSGLLLGLALNLL) is removed in mature form.

In terms of processing, the GPI-like anchor contains a phosphoceramide lipid group. The anchor position has not been determined.

It localises to the cell membrane. The catalysed reaction is a phosphate monoester + H2O = an alcohol + phosphate. Inhibited by NaF, molybdate and vanadate. Its function is as follows. Has both phosphomonoesterase and phosphodiesterase activity. Cleaves a broad range of phosphate esters. This is Acid phosphatase (phoA) from Aspergillus fumigatus (strain ATCC MYA-4609 / CBS 101355 / FGSC A1100 / Af293) (Neosartorya fumigata).